A 215-amino-acid chain; its full sequence is Thymidylate kinase (215 aa).

Position 10-17 (10-17) interacts with ATP; sequence GGEGVGKT.

This sequence belongs to the thymidylate kinase family.

It carries out the reaction dTMP + ATP = dTDP + ADP. Phosphorylation of dTMP to form dTDP in both de novo and salvage pathways of dTTP synthesis. The polypeptide is Thymidylate kinase (Bartonella henselae (strain ATCC 49882 / DSM 28221 / CCUG 30454 / Houston 1) (Rochalimaea henselae)).